The sequence spans 522 residues: Putative aldehyde dehydrogenase-like protein C21C3 (522 aa).

Catalysis depends on glutamate 239, which acts as the Proton acceptor. Catalysis depends on cysteine 273, which acts as the Nucleophile.

This sequence belongs to the aldehyde dehydrogenase family.

It localises to the cytoplasm. The protein resides in the nucleus. In Schizosaccharomyces pombe (strain 972 / ATCC 24843) (Fission yeast), this protein is Putative aldehyde dehydrogenase-like protein C21C3.